The primary structure comprises 282 residues: Bifunctional protein FolD (282 aa).

NADP(+) contacts are provided by residues 165–167 (GRS) and Ser190.

The protein belongs to the tetrahydrofolate dehydrogenase/cyclohydrolase family. As to quaternary structure, homodimer.

The catalysed reaction is (6R)-5,10-methylene-5,6,7,8-tetrahydrofolate + NADP(+) = (6R)-5,10-methenyltetrahydrofolate + NADPH. It catalyses the reaction (6R)-5,10-methenyltetrahydrofolate + H2O = (6R)-10-formyltetrahydrofolate + H(+). Its pathway is one-carbon metabolism; tetrahydrofolate interconversion. Catalyzes the oxidation of 5,10-methylenetetrahydrofolate to 5,10-methenyltetrahydrofolate and then the hydrolysis of 5,10-methenyltetrahydrofolate to 10-formyltetrahydrofolate. The sequence is that of Bifunctional protein FolD from Macrococcus caseolyticus (strain JCSC5402) (Macrococcoides caseolyticum).